Consider the following 189-residue polypeptide: GTP cyclohydrolase 1 (189 aa).

Zn(2+) contacts are provided by Cys-79, His-82, and Cys-150.

This sequence belongs to the GTP cyclohydrolase I family. In terms of assembly, homomer.

The enzyme catalyses GTP + H2O = 7,8-dihydroneopterin 3'-triphosphate + formate + H(+). The protein operates within cofactor biosynthesis; 7,8-dihydroneopterin triphosphate biosynthesis; 7,8-dihydroneopterin triphosphate from GTP: step 1/1. This is GTP cyclohydrolase 1 from Rickettsia africae (strain ESF-5).